We begin with the raw amino-acid sequence, 240 residues long: Ribosomal RNA small subunit methyltransferase G (240 aa).

Residues Gly80, Phe85, 131 to 132 (AE), and Arg150 contribute to the S-adenosyl-L-methionine site.

This sequence belongs to the methyltransferase superfamily. RNA methyltransferase RsmG family.

The protein localises to the cytoplasm. Functionally, specifically methylates the N7 position of a guanine in 16S rRNA. The polypeptide is Ribosomal RNA small subunit methyltransferase G (Dictyoglomus thermophilum (strain ATCC 35947 / DSM 3960 / H-6-12)).